The following is a 554-amino-acid chain: Hydroxylamine reductase (554 aa).

[2Fe-2S] cluster-binding residues include Cys3, Cys6, Cys18, and Cys25. Hybrid [4Fe-2O-2S] cluster is bound by residues His252, Glu276, Cys320, Cys408, Cys436, Cys461, Glu495, and Lys497. Cys408 is modified (cysteine persulfide).

Belongs to the HCP family. The cofactor is [2Fe-2S] cluster. Requires hybrid [4Fe-2O-2S] cluster as cofactor.

The protein localises to the cytoplasm. The catalysed reaction is A + NH4(+) + H2O = hydroxylamine + AH2 + H(+). Catalyzes the reduction of hydroxylamine to form NH(3) and H(2)O. In Shewanella baltica (strain OS185), this protein is Hydroxylamine reductase.